Reading from the N-terminus, the 207-residue chain is Antitermination protein Q (207 aa).

The tract at residues 1–28 (MRLESVAKFHSPKSPMMSDSPRATASDS) is disordered. Zn(2+)-binding residues include Cys-118, Cys-121, Cys-144, and Cys-147. Residues 118-147 (CRNCHGTGRAVDIAKTEQWGRVVEKECGRC) fold into a zinc finger. A DNA-binding region spans residues 171-192 (LTQPTWSRTVKPLYDALVVQCH).

The protein belongs to the phage antitermination Q type 2 family. In terms of assembly, interacts with host RPOB (via flap domain); this interaction renders host RNAP resistant to transcription pausing and allows it to read through termination signals. Interacts with host RNA polymerase sigma factor RPOD (via domain-4). Interacts with host NusA (via N-terminus and AR2 domain); this interaction releases the autoinhibition of NusA.

In terms of biological role, mediates the switch from middle to viral late gene expression by associating with host RNA polymerase (RNAP) so that the latter can read without pausing and through transcription terminators preceding late genes. Competes with host factor sigma 70 for binding to RPOB, the beta-subunit of host RNAP. To join the elongation complex, binds a specific DNA Q-binding element (QBE) and interacts with RNAP that is paused during early elongation. Participates in the lysis-lysogeny decision by activating the expression of the late lytic genes. This is Antitermination protein Q (23) from Salmonella typhimurium.